A 182-amino-acid polypeptide reads, in one-letter code: Troponin I, fast skeletal muscle (182 aa).

At Gly-2 the chain carries N-acetylglycine. An involved in binding TNC region spans residues 2-48 (GDEEKRNRAITARRQHLKSVMLQIAATELEKEESRRESEKENYLSEH). Residue Thr-12 is modified to Phosphothreonine. Over residues 29–45 (ELEKEESRRESEKENYL) the composition is skewed to basic and acidic residues. The interval 29 to 53 (ELEKEESRRESEKENYLSEHCPPLH) is disordered. Residues 97-117 (NQKLFDLRGKFKRPPLRRVRM) form an involved in binding TNC and actin region. Ser-118 is modified (phosphoserine).

The protein belongs to the troponin I family. Binds to actin and tropomyosin.

Troponin I is the inhibitory subunit of troponin, the thin filament regulatory complex which confers calcium-sensitivity to striated muscle actomyosin ATPase activity. This chain is Troponin I, fast skeletal muscle (Tnni2), found in Mus musculus (Mouse).